Reading from the N-terminus, the 150-residue chain is Arginine repressor (150 aa).

It belongs to the ArgR family.

It localises to the cytoplasm. Its pathway is amino-acid biosynthesis; L-arginine biosynthesis [regulation]. Regulates arginine biosynthesis genes. The sequence is that of Arginine repressor from Desulfitobacterium hafniense (strain DSM 10664 / DCB-2).